The following is a 250-amino-acid chain: Probable syntaxin-8B (250 aa).

Over 1-213 the chain is Cytoplasmic; that stretch reads MGDYWLNEHD…NRRMETIKQN (213 aa). A coiled-coil region spans residues 73–100; sequence EKELLRRKNKVESLISMKNQLNSTLDAA. The t-SNARE coiled-coil homology domain occupies 148 to 210; sequence QHIMREQDES…RNANRRMETI (63 aa). The helical; Anchor for type IV membrane protein transmembrane segment at 214–234 threads the bilayer; it reads AGSTCMIVCIVILIILIVVLI. Residues 235–250 are Vesicular-facing; sequence ATDSGCKIYNDPKHCP.

It belongs to the syntaxin family.

The protein localises to the membrane. In Dictyostelium discoideum (Social amoeba), this protein is Probable syntaxin-8B (syn8B).